Here is a 483-residue protein sequence, read N- to C-terminus: MLTLDTLNVMLAVGEEGLIEEVVLTLLASPQLAAFFEKFPRIKKAVTDDLPRWRDSLRRRLKETEVPPELTEEVECYQQCQRLSTPQFMVQLPQILTLLDKVHSPYAAQARKLVTDNATFTPALHTLFLQRWRLSLVVQTTSLNQQLLEEEREQLLSEVQERMTLTGQLEQVLVENENSAGRLWDMSAGQIKRGDYQLIVKYGDFLAQQPELMQLAEQLGRSREAKSVPKKDAPMETFRTLVREPATVPEQVDGLQQSDDILRLLPTELATLGITELEYEFYRRLVEKQLLTYRLQGESWHEKISQRPVVHQDFDEQPRGPFIVCVDTSGSMGGFNEQCAKAFCLALMRVALADRRRCFIMLFSSEVVGYELTAEQGIEQAIRFLSQRFRGGTDIASCFRSIIERMQGGDWYDADAVVISDFIAQRLPDDVVAKVKSLQRDQQHRFHAVAMSAHGKPGIMRIFDHIWRFDTGLRSRLIRRWKR.

This sequence belongs to the ViaA family. As to quaternary structure, homodimer. Interacts with RavA.

It is found in the cytoplasm. Functionally, component of the RavA-ViaA chaperone complex, which may act on the membrane to optimize the function of some of the respiratory chains. ViaA stimulates the ATPase activity of RavA. The sequence is that of Regulatory protein ViaA from Enterobacter sp. (strain 638).